Consider the following 1133-residue polypeptide: Guanine nucleotide-binding protein G(s) subunit alpha isoforms XLas (1133 aa).

Disordered regions lie at residues 1-195, 322-552, 611-648, and 724-744; these read MGMF…PEAL, DDTA…VPGA, SASA…WPDK, and RSRS…RKQM. Residues 31–48 show a composition bias toward low complexity; it reads LEAPGAAAPGAGAGPAEE. Positions 347 to 362 are enriched in basic and acidic residues; the sequence is DKSECAERPPVEREAA. Composition is skewed to low complexity over residues 391–404, 459–471, 482–498, 515–525, and 535–552; these read PEAM…AAQA, GGAA…TPAE, AEPA…ESAS, ATLAEPAARAA, and RAVP…VPGA. The segment covering 633–643 has biased composition (pro residues); sequence PPTPRPPPRPT. Residues 732–744 show a composition bias toward basic and acidic residues; the sequence is KAKDPMEERRKQM. A coiled-coil region spans residues 737 to 761; that stretch reads MEERRKQMRKEAIEMREQKRADKKR. The region spanning 778–1133 is the G-alpha domain; the sequence is CTHRLLLLGA…RMHLRQYELL (356 aa). Residues 781–794 are G1 motif; that stretch reads RLLLLGAGESGKST. Residue 786–794 coordinates GTP; it reads GAGESGKST. Ser793 is a binding site for Mg(2+). The interval 807-828 is disordered; it reads FNGEGGEEDPQAARSNSDGEKA. The G2 motif stretch occupies residues 935–943; it reads DLLRCRVLT. Residues 936-943, 962-966, and 1031-1034 each bind GTP; these read LLRCRVLT, DVGGQ, and NKQD. Arg940 is modified (ADP-ribosylarginine; by cholera toxin). Residue Thr943 coordinates Mg(2+). The tract at residues 958–967 is G3 motif; the sequence is FHMFDVGGQR. A G4 motif region spans residues 1027 to 1034; that stretch reads ILFLNKQD. Ser1091 carries the phosphoserine modification. A G5 motif region spans residues 1103 to 1108; it reads TCAVDT. Ala1105 is a binding site for GTP.

This sequence belongs to the G-alpha family. G(s) subfamily. As to quaternary structure, g proteins are composed of 3 units; alpha, beta and gamma. The alpha chain contains the guanine nucleotide binding site. Interacts through its N-terminal region with ALEX which is produced from the same locus in a different open reading frame. This interaction may inhibit its adenylyl cyclase-stimulating activity. Interacts with MAGED2.

It is found in the cell membrane. The protein resides in the apical cell membrane. The enzyme catalyses GTP + H2O = GDP + phosphate + H(+). In terms of biological role, guanine nucleotide-binding proteins (G proteins) function as transducers in numerous signaling pathways controlled by G protein-coupled receptors (GPCRs). The alpha chain contains the guanine nucleotide binding site and alternates between an active, GTP-bound state and an inactive, GDP-bound state. Signaling by an activated GPCR promotes GDP release and GTP binding. The alpha subunit has a low GTPase activity that converts bound GTP to GDP, thereby terminating the signal. Both GDP release and GTP hydrolysis are modulated by numerous regulatory proteins. Signaling involves the activation of adenylyl cyclases, resulting in increased levels of the signaling molecule cAMP. GNAS functions downstream of several GPCRs, including beta-adrenergic receptors. XLas isoforms interact with the same set of receptors as Gnas isoforms. The sequence is that of Guanine nucleotide-binding protein G(s) subunit alpha isoforms XLas from Mus musculus (Mouse).